We begin with the raw amino-acid sequence, 55 residues long: Large ribosomal subunit protein bL33 (55 aa).

This sequence belongs to the bacterial ribosomal protein bL33 family.

In Rhizorhabdus wittichii (strain DSM 6014 / CCUG 31198 / JCM 15750 / NBRC 105917 / EY 4224 / RW1) (Sphingomonas wittichii), this protein is Large ribosomal subunit protein bL33.